We begin with the raw amino-acid sequence, 764 residues long: Subtilisin-like protease SBT3.1 (764 aa).

The first 32 residues, 1 to 32 (MIQTLKTDSSFRLCFAAIAFGFVFIMNGKLSS), serve as a signal peptide directing secretion. Positions 33–120 (GTTPHEFPVY…LLENRKLGLQ (88 aa)) are cleaved as a propeptide — activation peptide. Residues 41 to 116 (VYIFYLGERK…EVIILLENRK (76 aa)) enclose the Inhibitor I9 domain. Asn-76 carries N-linked (GlcNAc...) asparagine glycosylation. The 487-residue stretch at 124–610 (TWDYLGQFST…GGLVNLEKAT (487 aa)) folds into the Peptidase S8 domain. The Charge relay system role is filled by Asp-156. Asn-216 carries N-linked (GlcNAc...) asparagine glycosylation. Residue His-230 is the Charge relay system of the active site. Asn-245 and Asn-374 each carry an N-linked (GlcNAc...) asparagine glycan. Ser-541 serves as the catalytic Charge relay system. 3 N-linked (GlcNAc...) asparagine glycosylation sites follow: Asn-674, Asn-711, and Asn-747.

It belongs to the peptidase S8 family.

The protein resides in the secreted. The protein is Subtilisin-like protease SBT3.1 of Arabidopsis thaliana (Mouse-ear cress).